Reading from the N-terminus, the 150-residue chain is Transcriptional repressor NrdR (150 aa).

A zinc finger lies at 3-33 (CPYCTGESAVIDTRELDNGETIRRRRRCKHC). The region spanning 48–138 (VMVVKKNGDR…VYRSFSDLGK (91 aa)) is the ATP-cone domain.

It belongs to the NrdR family. It depends on Zn(2+) as a cofactor.

Negatively regulates transcription of bacterial ribonucleotide reductase nrd genes and operons by binding to NrdR-boxes. In Herpetosiphon aurantiacus (strain ATCC 23779 / DSM 785 / 114-95), this protein is Transcriptional repressor NrdR.